The following is a 144-amino-acid chain: uncharacterized protein (144 aa).

The signal sequence occupies residues 1–23 (MRKILLFATVIGFLIMVSGTLSY).

This is an uncharacterized protein from Archaeoglobus fulgidus (strain ATCC 49558 / DSM 4304 / JCM 9628 / NBRC 100126 / VC-16).